Here is a 211-residue protein sequence, read N- to C-terminus: Arginine exporter protein ArgO (211 aa).

6 helical membrane passes run 1–21, 37–57, 68–88, 111–131, 147–167, and 179–199; these read MISY…PLGP, LMIA…GIFG, LLAL…FGAL, IIAT…DTFV, WFAL…ALLA, and AQRI…FQLA.

This sequence belongs to the LysE/ArgO transporter (TC 2.A.75) family.

It is found in the cell inner membrane. The catalysed reaction is L-arginine(in) = L-arginine(out). In terms of biological role, involved in the export of arginine. Important to control the intracellular level of arginine and the correct balance between arginine and lysine. This Salmonella paratyphi B (strain ATCC BAA-1250 / SPB7) protein is Arginine exporter protein ArgO.